Here is a 393-residue protein sequence, read N- to C-terminus: Formate-dependent phosphoribosylglycinamide formyltransferase (393 aa).

N(1)-(5-phospho-beta-D-ribosyl)glycinamide is bound by residues 22 to 23 and Glu-82; that span reads EL. Residues Arg-114, Lys-155, 160–165, 195–198, and Glu-203 each bind ATP; these read SSGKGQ and EGFI. Positions 119 to 308 constitute an ATP-grasp domain; that stretch reads RLAAEELDLP…QFALHARAIL (190 aa). Mg(2+) is bound by residues Glu-267 and Glu-279. N(1)-(5-phospho-beta-D-ribosyl)glycinamide is bound by residues Asp-286, Lys-356, and 363–364; that span reads RR.

The protein belongs to the PurK/PurT family. As to quaternary structure, homodimer.

The enzyme catalyses N(1)-(5-phospho-beta-D-ribosyl)glycinamide + formate + ATP = N(2)-formyl-N(1)-(5-phospho-beta-D-ribosyl)glycinamide + ADP + phosphate + H(+). It participates in purine metabolism; IMP biosynthesis via de novo pathway; N(2)-formyl-N(1)-(5-phospho-D-ribosyl)glycinamide from N(1)-(5-phospho-D-ribosyl)glycinamide (formate route): step 1/1. Involved in the de novo purine biosynthesis. Catalyzes the transfer of formate to 5-phospho-ribosyl-glycinamide (GAR), producing 5-phospho-ribosyl-N-formylglycinamide (FGAR). Formate is provided by PurU via hydrolysis of 10-formyl-tetrahydrofolate. This Pseudomonas putida (strain GB-1) protein is Formate-dependent phosphoribosylglycinamide formyltransferase.